The sequence spans 355 residues: SH3 domain-containing protein Dlish (355 aa).

SH3 domains are found at residues 57 to 117 (SPDS…PCNT), 183 to 243 (EPSG…PADS), and 287 to 352 (YHGT…PPAM).

In terms of assembly, interacts with dachs (via C-terminus); the interaction is direct. Interacts (via N-terminus including SH3 domain 1) with palmitoyltransferase app; this leads to palmitoylation of Dlish by app. Also interacts with dco, ft, ft-regulated E3 ubiquitin ligase Fbxl7, F-box protein slmb and SCF E3 ubiquitin-protein ligase complex component Cul1. Post-translationally, palmitoylated by app.

The protein localises to the cytoplasm. Its subcellular location is the cell cortex. Functionally, required for the apical cell cortex localization, total cellular level and full activity of dachs. The polypeptide is SH3 domain-containing protein Dlish (Drosophila melanogaster (Fruit fly)).